We begin with the raw amino-acid sequence, 217 residues long: MSEAMMWLLVRGVWETLAMTFVSGFFGFVIGLPVGVLLYVTRPGQIMENARLYRSLSAVVNIFRSIPFIILLVWMIPFTRIIVGTSIGLQAAIVPLTVGAAPFIARMVENALLEIPAGLIEASRAMGATPLQIVRKILLPEALPGLVNAATITLITLVGYSAMGGAVGAGGLGQIGYQYGYIGYNATVMNTVLVLLVVLVYLIQLSGDRIVRAVTHK.

Residues 1–19 (MSEAMMWLLVRGVWETLAM) lie on the Periplasmic side of the membrane. The 192-residue stretch at 13–204 (VWETLAMTFV…LLVVLVYLIQ (192 aa)) folds into the ABC transmembrane type-1 domain. A helical transmembrane segment spans residues 20–40 (TFVSGFFGFVIGLPVGVLLYV). Residues 41-54 (TRPGQIMENARLYR) lie on the Cytoplasmic side of the membrane. The helical transmembrane segment at 55-77 (SLSAVVNIFRSIPFIILLVWMIP) threads the bilayer. The Periplasmic portion of the chain corresponds to 78–92 (FTRIIVGTSIGLQAA). The chain crosses the membrane as a helical span at residues 93–113 (IVPLTVGAAPFIARMVENALL). Topologically, residues 114 to 151 (EIPAGLIEASRAMGATPLQIVRKILLPEALPGLVNAAT) are cytoplasmic. A helical transmembrane segment spans residues 152 to 172 (ITLITLVGYSAMGGAVGAGGL). Residues 173-185 (GQIGYQYGYIGYN) are Periplasmic-facing. The helical transmembrane segment at 186–206 (ATVMNTVLVLLVVLVYLIQLS) threads the bilayer. Residues 207-217 (GDRIVRAVTHK) are Cytoplasmic-facing.

The protein belongs to the binding-protein-dependent transport system permease family. CysTW subfamily.

Its subcellular location is the cell inner membrane. In terms of biological role, part of the binding-protein-dependent transport system for D-methionine and the toxic methionine analog alpha-methyl-methionine. Probably responsible for the translocation of the substrate across the membrane. This is D-methionine transport system permease protein MetI (metI) from Salmonella typhimurium (strain LT2 / SGSC1412 / ATCC 700720).